Reading from the N-terminus, the 1123-residue chain is Adenylyl cyclase X E (1123 aa).

The Cytoplasmic segment spans residues 1-47 (MPRSLGNCQLNYSKERMWEPGYLKAKCAELRLESEFRLYRIRLWKSY). Residues 48 to 68 (LLTFFMLHIFVTSVHCALLLA) form a helical membrane-spanning segment. At 69-73 (TIERR) the chain is on the extracellular side. A helical membrane pass occupies residues 74–94 (SIIYFDVALSIGCALVLILVL). At 95–106 (SVNFCDEFIAKH) the chain is on the cytoplasmic side. Residues 107–127 (TWYMYASSIFASLTLVFADLT) form a helical membrane-spanning segment. At 128–137 (ESIYHTYAHS) the chain is on the extracellular side. Residues 138–158 (WILGTFYDTYIIYMIYMFLPI) traverse the membrane as a helical segment. Over 159–163 (HFISG) the chain is Cytoplasmic. A helical membrane pass occupies residues 164–184 (AVLLALLVSGLYILYFVIFIA). Over 185 to 196 (QGFAQFASALFS) the chain is Extracellular. Residues 197 to 217 (VGGMSVDIVHYLCLNLVGIFY) traverse the membrane as a helical segment. At 218 to 581 (RVMNDTVVRS…YLKQTDYMYK (364 aa)) the chain is on the cytoplasmic side. ATP-binding positions include 346 to 348 (LGD) and R392. D348 is a binding site for Mg(2+). A helical membrane pass occupies residues 582–602 (YSIILSASVGCSLVYIELMDT). Residues 603–608 (QMICSS) lie on the Extracellular side of the membrane. The helical transmembrane segment at 609–629 (CFVLPASVATIQCILALIAWY) threads the bilayer. Residues 630 to 667 (KKYCWTRYGRNNVPHHYNGFSCFIFRIHDKILNSLPIR) lie on the Cytoplasmic side of the membrane. A helical transmembrane segment spans residues 668 to 688 (ICIYLFLMISSFFVMCLIVMS). Residues 689-719 (CQREEFEMAYIEERLFHYEQEAHICFHPWVT) lie on the Extracellular side of the membrane. A helical transmembrane segment spans residues 720–740 (TNMLSLMICLTFTFAHIPIMV). Residues 741-743 (KTA) lie on the Cytoplasmic side of the membrane. The chain crosses the membrane as a helical span at residues 744–764 (VAILETLAYLLLIFFQFDFVF). At 765-772 (HHSVTTNP) the chain is on the extracellular side. A helical transmembrane segment spans residues 773–793 (YFKSEYAHALLICITFLIMFV). The Cytoplasmic segment spans residues 794–1123 (KERQIEFTNK…STSRHTLQSL (330 aa)). ATP contacts are provided by residues K903, 1014–1016 (DIW), 1021–1025 (NMASR), and K1061.

Belongs to the adenylyl cyclase class-4/guanylyl cyclase family. Expressed in labella.

The protein resides in the membrane. It carries out the reaction ATP = 3',5'-cyclic AMP + diphosphate. In terms of biological role, catalyzes the formation of the signaling molecule cAMP in response to G-protein signaling. The polypeptide is Adenylyl cyclase X E (Drosophila melanogaster (Fruit fly)).